The following is a 169-amino-acid chain: Der GTPase-activating protein YihI (169 aa).

Disordered regions lie at residues 1–99 (MKPS…QAEL) and 146–169 (SYDD…LRGN). Over residues 10-19 (SKGHAKARRK) the composition is skewed to basic residues. The segment covering 20-30 (TREELDQEARD) has biased composition (basic and acidic residues). A compositionally biased stretch (basic residues) spans 31–40 (RKRQKKRRGH). Over residues 49-58 (GNTTSGSKGQ) the composition is skewed to polar residues. Acidic residues predominate over residues 147–159 (YDDDEEEEEDEKQ). Residues 160–169 (EDMMRLLRGN) are compositionally biased toward basic and acidic residues.

Belongs to the YihI family. In terms of assembly, interacts with Der.

A GTPase-activating protein (GAP) that modifies Der/EngA GTPase function. May play a role in ribosome biogenesis. This is Der GTPase-activating protein YihI from Escherichia coli O81 (strain ED1a).